We begin with the raw amino-acid sequence, 319 residues long: Cobalamin biosynthesis protein CobD (319 aa).

The next 4 membrane-spanning stretches (helical) occupy residues 55-75 (AVMW…VLAL), 78-98 (EIHP…VLAG), 153-173 (VDGI…LAMA), and 296-316 (LMWV…CLLV).

Belongs to the CobD/CbiB family.

The protein resides in the cell membrane. It functions in the pathway cofactor biosynthesis; adenosylcobalamin biosynthesis. Functionally, converts cobyric acid to cobinamide by the addition of aminopropanol on the F carboxylic group. In Citrobacter koseri (strain ATCC BAA-895 / CDC 4225-83 / SGSC4696), this protein is Cobalamin biosynthesis protein CobD.